The following is a 181-amino-acid chain: Protein GrpE (181 aa).

Acidic residues predominate over residues 1 to 24 (MSEENIGENEVETPETEPSAEAEV). Residues 1 to 26 (MSEENIGENEVETPETEPSAEAEVES) are disordered.

The protein belongs to the GrpE family. Homodimer.

Its subcellular location is the cytoplasm. In terms of biological role, participates actively in the response to hyperosmotic and heat shock by preventing the aggregation of stress-denatured proteins, in association with DnaK and GrpE. It is the nucleotide exchange factor for DnaK and may function as a thermosensor. Unfolded proteins bind initially to DnaJ; upon interaction with the DnaJ-bound protein, DnaK hydrolyzes its bound ATP, resulting in the formation of a stable complex. GrpE releases ADP from DnaK; ATP binding to DnaK triggers the release of the substrate protein, thus completing the reaction cycle. Several rounds of ATP-dependent interactions between DnaJ, DnaK and GrpE are required for fully efficient folding. The protein is Protein GrpE of Rhizorhabdus wittichii (strain DSM 6014 / CCUG 31198 / JCM 15750 / NBRC 105917 / EY 4224 / RW1) (Sphingomonas wittichii).